Consider the following 145-residue polypeptide: Ribosomal RNA large subunit methyltransferase H (145 aa).

Residues G94 and 113–118 (LSPLTF) each bind S-adenosyl-L-methionine.

The protein belongs to the RNA methyltransferase RlmH family. As to quaternary structure, homodimer.

Its subcellular location is the cytoplasm. It carries out the reaction pseudouridine(1915) in 23S rRNA + S-adenosyl-L-methionine = N(3)-methylpseudouridine(1915) in 23S rRNA + S-adenosyl-L-homocysteine + H(+). Specifically methylates the pseudouridine at position 1915 (m3Psi1915) in 23S rRNA. The sequence is that of Ribosomal RNA large subunit methyltransferase H from Sorangium cellulosum (strain So ce56) (Polyangium cellulosum (strain So ce56)).